Consider the following 708-residue polypeptide: Leukotoxin translocation ATP-binding protein LktB (708 aa).

The Peptidase C39 domain occupies 1 to 126; the sequence is MEANHQRNDL…ACYQGQLILV (126 aa). The region spanning 155-437 is the ABC transmembrane type-1 domain; the sequence is FLETLIVSIF…LAQLWQDFQQ (283 aa). The next 5 helical transmembrane spans lie at 159-179, 192-212, 270-290, 296-316, and 389-409; these read LIVS…FQVV, LNII…LSGL, ALTS…MWYY, LVIL…SPIL, and VMVI…LSIG. Positions 469–704 constitute an ABC transporter domain; the sequence is ISFKNIRFRY…SNGLYSYLHQ (236 aa). 503 to 510 is a binding site for ATP; the sequence is GRSGSGKS.

The protein belongs to the ABC transporter superfamily. Protein-1 exporter (TC 3.A.1.109) family. In terms of assembly, homodimer.

Its subcellular location is the cell inner membrane. It carries out the reaction ATP + H2O + proteinSide 1 = ADP + phosphate + proteinSide 2.. In terms of biological role, part of the ABC transporter complex LktBD involved in leukotoxin export. Transmembrane domains (TMD) form a pore in the inner membrane and the ATP-binding domain (NBD) is responsible for energy generation. This Bibersteinia trehalosi (Pasteurella trehalosi) protein is Leukotoxin translocation ATP-binding protein LktB (lktB).